Reading from the N-terminus, the 246-residue chain is 4-hydroxy-tetrahydrodipicolinate reductase (246 aa).

7-12 is an NAD(+) binding site; the sequence is GCSGRM. NADP(+) is bound at residue R34. NAD(+) is bound by residues 76–78 and 102–105; these read ATT and CPNT. The Proton donor/acceptor role is filled by H135. Residue H136 coordinates (S)-2,3,4,5-tetrahydrodipicolinate. K139 serves as the catalytic Proton donor. 145–146 serves as a coordination point for (S)-2,3,4,5-tetrahydrodipicolinate; it reads GT.

Belongs to the DapB family.

The protein localises to the cytoplasm. It carries out the reaction (S)-2,3,4,5-tetrahydrodipicolinate + NAD(+) + H2O = (2S,4S)-4-hydroxy-2,3,4,5-tetrahydrodipicolinate + NADH + H(+). The catalysed reaction is (S)-2,3,4,5-tetrahydrodipicolinate + NADP(+) + H2O = (2S,4S)-4-hydroxy-2,3,4,5-tetrahydrodipicolinate + NADPH + H(+). It functions in the pathway amino-acid biosynthesis; L-lysine biosynthesis via DAP pathway; (S)-tetrahydrodipicolinate from L-aspartate: step 4/4. Functionally, catalyzes the conversion of 4-hydroxy-tetrahydrodipicolinate (HTPA) to tetrahydrodipicolinate. The chain is 4-hydroxy-tetrahydrodipicolinate reductase from Chlamydia felis (strain Fe/C-56) (Chlamydophila felis).